A 339-amino-acid chain; its full sequence is Glycerol-3-phosphate dehydrogenase [NAD(P)+] (339 aa).

NADPH-binding residues include Ser-15, Tyr-16, His-36, and Lys-110. Sn-glycerol 3-phosphate is bound by residues Lys-110, Gly-139, and Thr-141. Residue Ala-143 coordinates NADPH. Sn-glycerol 3-phosphate contacts are provided by Lys-195, Asp-248, Ser-258, Arg-259, and Asn-260. The active-site Proton acceptor is the Lys-195. Arg-259 contacts NADPH. Residues Val-283 and Glu-285 each contribute to the NADPH site.

This sequence belongs to the NAD-dependent glycerol-3-phosphate dehydrogenase family.

Its subcellular location is the cytoplasm. The catalysed reaction is sn-glycerol 3-phosphate + NAD(+) = dihydroxyacetone phosphate + NADH + H(+). The enzyme catalyses sn-glycerol 3-phosphate + NADP(+) = dihydroxyacetone phosphate + NADPH + H(+). It participates in membrane lipid metabolism; glycerophospholipid metabolism. Catalyzes the reduction of the glycolytic intermediate dihydroxyacetone phosphate (DHAP) to sn-glycerol 3-phosphate (G3P), the key precursor for phospholipid synthesis. This Cronobacter sakazakii (strain ATCC BAA-894) (Enterobacter sakazakii) protein is Glycerol-3-phosphate dehydrogenase [NAD(P)+].